The chain runs to 120 residues: Large ribosomal subunit protein bL20 (120 aa).

Belongs to the bacterial ribosomal protein bL20 family.

Binds directly to 23S ribosomal RNA and is necessary for the in vitro assembly process of the 50S ribosomal subunit. It is not involved in the protein synthesizing functions of that subunit. The polypeptide is Large ribosomal subunit protein bL20 (Paracidovorax citrulli (strain AAC00-1) (Acidovorax citrulli)).